A 411-amino-acid polypeptide reads, in one-letter code: Putative odorant receptor 59c (411 aa).

Residues 1 to 46 (MTKFFFKRLQTAPLDQEVSSLDASDYYYRIAFFLGWTPPKGALLRW) lie on the Cytoplasmic side of the membrane. A helical membrane pass occupies residues 47 to 67 (IYSLWTLTTMWLGIVYLPLGL). Residues 68–86 (SLTYVKHFDRFTPTEFLTS) lie on the Extracellular side of the membrane. The helical transmembrane segment at 87-107 (LQVDINCIGNVIKSCVTYSQM) threads the bilayer. The Cytoplasmic segment spans residues 108–139 (WRFRRMNELISSLDKRCVTTTQRRIFHKMVAR). The helical transmembrane segment at 140–160 (VNLIVILFLSTYLGFCFLTLF) threads the bilayer. Topologically, residues 161–185 (TSVFAGKAPWQLYNPLVDWRKGHWQ) are extracellular. A helical transmembrane segment spans residues 186 to 206 (LWIASILEYCVVSIGTMQELM). The Cytoplasmic portion of the chain corresponds to 207 to 271 (SDTYAIVFIS…QIIRPILSIT (65 aa)). A helical transmembrane segment spans residues 272 to 292 (IFAQFMLVGIDLGLAAISILF). Residues 293–296 (FPNT) are Extracellular-facing. The chain crosses the membrane as a helical span at residues 297–317 (IWTIMANVSFIVAICTESFPC). The Cytoplasmic segment spans residues 318–369 (CMLCEHLIEDSVHVSNALFHSNWITADRSYKSAVLYFLHRAQQPIQFTAGSI). Residues 370–390 (FPISVQSNIAVAKFAFTIITI) form a helical membrane-spanning segment. The Extracellular segment spans residues 391–411 (VNQMNLGEKFFSDRSNGDINP).

Belongs to the insect chemoreceptor superfamily. Heteromeric odorant receptor channel (TC 1.A.69) family. Or2a subfamily. Interacts with Orco. Complexes exist early in the endomembrane system in olfactory sensory neurons (OSNs), coupling these complexes to the conserved ciliary trafficking pathway. As to expression, expressed in olfactory sensory neurons in the maxillary palp.

The protein localises to the cell membrane. Odorant receptor which mediates acceptance or avoidance behavior, depending on its substrates. The odorant receptor repertoire encodes a large collection of odor stimuli that vary widely in identity, intensity, and duration. May form a complex with Orco to form odorant-sensing units, providing sensitive and prolonged odorant signaling and calcium permeability. This is Putative odorant receptor 59c (Or59c) from Drosophila melanogaster (Fruit fly).